The primary structure comprises 370 residues: MNNTPRRLLIAGGGTGGHLFPALAVAERWRERYGLHSVHFIGGQRGLENRLVPNAGFTLETLAVGQLKGKGLPHKLRTLGGLLPAVWQARGMVQRFDPHVVLGVGGYASAPAMVAARSLGIPMALHEQNARAGLTNRLLSHLAQQVLVSFNGVCAQFPGRACQLTGNPVRQALAAVPPLQIPTLFTPQRPLRILVFGGSQGASIFTQRVPEALLPLAQHGAPIQVTQQVQEADADALQRRYQEGGIEAITTPFIEDMATAYAQADLVICRSGATSVAELAATGRPSIMVPYPYAADDHQAANAQALVSIQGGWMRRQEQFHSAWLEAFITSLCMQPAQLQRAGEIARSYARPNADMQIVTLLASMVKMKR.

UDP-N-acetyl-alpha-D-glucosamine is bound by residues 15-17 (TGG), Asn129, Arg170, Ser199, Ile254, and Gln299.

This sequence belongs to the glycosyltransferase 28 family. MurG subfamily.

It localises to the cell inner membrane. The catalysed reaction is di-trans,octa-cis-undecaprenyl diphospho-N-acetyl-alpha-D-muramoyl-L-alanyl-D-glutamyl-meso-2,6-diaminopimeloyl-D-alanyl-D-alanine + UDP-N-acetyl-alpha-D-glucosamine = di-trans,octa-cis-undecaprenyl diphospho-[N-acetyl-alpha-D-glucosaminyl-(1-&gt;4)]-N-acetyl-alpha-D-muramoyl-L-alanyl-D-glutamyl-meso-2,6-diaminopimeloyl-D-alanyl-D-alanine + UDP + H(+). Its pathway is cell wall biogenesis; peptidoglycan biosynthesis. Functionally, cell wall formation. Catalyzes the transfer of a GlcNAc subunit on undecaprenyl-pyrophosphoryl-MurNAc-pentapeptide (lipid intermediate I) to form undecaprenyl-pyrophosphoryl-MurNAc-(pentapeptide)GlcNAc (lipid intermediate II). In Magnetococcus marinus (strain ATCC BAA-1437 / JCM 17883 / MC-1), this protein is UDP-N-acetylglucosamine--N-acetylmuramyl-(pentapeptide) pyrophosphoryl-undecaprenol N-acetylglucosamine transferase.